Consider the following 109-residue polypeptide: Probable gas vesicle protein J1 (109 aa).

This sequence belongs to the gas vesicle GvpA family. As to quaternary structure, interacts with GvpA.

Its subcellular location is the gas vesicle. Its function is as follows. A minor component of the gas vesicle, might be involved in nucleating gas vesicle formation. Gas vesicles (GV) are hollow, gas filled proteinaceous nanostructures. It is not clear what function GVs perform in soil bacteria. This chain is Probable gas vesicle protein J1 (gvpJ1), found in Streptomyces coelicolor (strain ATCC BAA-471 / A3(2) / M145).